The following is a 144-amino-acid chain: Large ribosomal subunit protein uL16 (144 aa).

Belongs to the universal ribosomal protein uL16 family. In terms of assembly, part of the 50S ribosomal subunit.

Binds 23S rRNA and is also seen to make contacts with the A and possibly P site tRNAs. The chain is Large ribosomal subunit protein uL16 from Oceanobacillus iheyensis (strain DSM 14371 / CIP 107618 / JCM 11309 / KCTC 3954 / HTE831).